We begin with the raw amino-acid sequence, 627 residues long: DNA topoisomerase 4 subunit B (627 aa).

ATP is bound by residues Y4, N41, D68, 109-115 (GLHGVGV), and K333. A Toprim domain is found at 412–525 (TELFIVEGDS…NGHIYIAQPP (114 aa)). Mg(2+)-binding residues include E418, D490, and D492.

This sequence belongs to the type II topoisomerase family. ParE type 1 subfamily. Heterotetramer composed of ParC and ParE. It depends on Mg(2+) as a cofactor. Mn(2+) is required as a cofactor. The cofactor is Ca(2+).

The enzyme catalyses ATP-dependent breakage, passage and rejoining of double-stranded DNA.. Its activity is regulated as follows. Pyrrolopyrimidines inhibit both GyrB and its paralog in topoisomerase IV (parE). Functionally, topoisomerase IV is essential for chromosome segregation. It relaxes supercoiled DNA. Performs the decatenation events required during the replication of a circular DNA molecule. This Francisella tularensis subsp. holarctica (strain LVS) protein is DNA topoisomerase 4 subunit B.